The sequence spans 395 residues: Ketol-acid reductoisomerase, mitochondrial (395 aa).

Residues 1 to 47 (MLRTQAARLICNSRVITAKRTFALATRAAAYSRPAARFVKPMITTRG) constitute a mitochondrion transit peptide. Positions 57-246 (VETVYERADW…AIGSGYVYQT (190 aa)) constitute a KARI N-terminal Rossmann domain. NADP(+) contacts are provided by residues 84–93 (GYGSQGYGQG), 108–113 (RKDGAS), and 146–150 (SDAAQ). The active site involves His-171. One can recognise a KARI C-terminal knotted domain in the interval 247–394 (TFEREVNSDL…KEVRKLRPEN (148 aa)). The Mg(2+) site is built by Asp-255, Glu-259, Glu-291, and Glu-295. Residue Ser-317 participates in substrate binding. A Phosphoserine modification is found at Ser-355. Residues 363-395 (DYREKLEKELDTIRNMEIWKVGKEVRKLRPENQ) are hydrophilic.

Belongs to the ketol-acid reductoisomerase family. It depends on Mg(2+) as a cofactor.

Its subcellular location is the mitochondrion. It carries out the reaction (2R)-2,3-dihydroxy-3-methylbutanoate + NADP(+) = (2S)-2-acetolactate + NADPH + H(+). The enzyme catalyses (2R,3R)-2,3-dihydroxy-3-methylpentanoate + NADP(+) = (S)-2-ethyl-2-hydroxy-3-oxobutanoate + NADPH + H(+). Its pathway is amino-acid biosynthesis; L-isoleucine biosynthesis; L-isoleucine from 2-oxobutanoate: step 2/4. The protein operates within amino-acid biosynthesis; L-valine biosynthesis; L-valine from pyruvate: step 2/4. Its function is as follows. Involved in the biosynthesis of branched-chain amino acids (BCAA). Catalyzes the second common step in the parallel biosynthesis of isoleucine and valine. Converts alpha-aceto-alpha-hydroxybutyrate (AHB) to alpha,beta-dihydroxy-beta-methylvalerate (DHMV) and alpha-acetolactate (AL) to alpha,beta-dihydroxy-isovalerate (DHV) in isoleucine and valine biosynthesis, respectively. This chain is Ketol-acid reductoisomerase, mitochondrial, found in Saccharomyces cerevisiae (strain ATCC 204508 / S288c) (Baker's yeast).